A 311-amino-acid polypeptide reads, in one-letter code: CD-NTase-associated protein 12 (311 aa).

A TIR domain is found at 4–121 (RIFIGSSKEG…LLGITVPQFE (118 aa)). Positions 157 to 311 (STVLAIGYFY…RNIVKIIQEE (155 aa)) are STING domain. 3 residues coordinate 3',3'-c-di-GMP: Phe168, Pro232, and Asp249.

The protein in the C-terminal section; belongs to the bacterial STING family. As to quaternary structure, forms homodimers; in the presence of c-di-GMP forms filaments with an ordered array of parallel-stacked subunits.

It catalyses the reaction NAD(+) + H2O = ADP-D-ribose + nicotinamide + H(+). NAD(+) hydrolase activity is strongly stimulated by c-di-GMP, weakly by 3'3'-cGAMP, very weakly by c-di-AMP but not at all by 2'3'-cGAMP. Self-association of TIR domains is required for NADase activity. In terms of biological role, effector protein of a CBASS antiviral system with NAD(+) hydrolase activity. CBASS (cyclic oligonucleotide-based antiphage signaling system) provides immunity against bacteriophage. The CD-NTase protein synthesizes cyclic nucleotides in response to infection; these serve as specific second messenger signals. The signals activate a diverse range of effectors, leading to bacterial cell death and thus abortive phage infection. A type I-D CBASS(GG) system. Binds c-di-GMP, does not bind cUMP-AMP. Upon activation by c-di-GMP forms filaments which hydrolyze NAD(+); filament formation is required for enzyme activation. The protein is CD-NTase-associated protein 12 of Flavobacterium daejeonense.